Consider the following 382-residue polypeptide: MDGETAEEQGGPVPPPVAPGGPGLGGAPGGRREPKKYAVTDDYQLSKQVLGLGVNGKVLECFHRRTGQKCALKLLYDSPKARQEVDHHWQASGGPHIVCILDVYENMHHGKRCLLIIMECMEGGELFSRIQERGDQAFTEREAAEIMRDIGTAIQFLHSHNIAHRDVKPENLLYTSKEKDAVLKLTDFGFAKETTQNALQTPCYTPYYVAPEVLGPEKYDKSCDMWSLGVIMYILLCGFPPFYSNTGQAISPGMKRRIRLGQYGFPNPEWSEVSEDAKQLIRLLLKTDPTERLTITQFMNHPWINQSMVVPQTPLHTARVLQEDKDHWDEVKEEMTSALATMRVDYDQVKIKDLKTSNNRLLNKRRKKQAGSSSASQGCNNQ.

At Met1 the chain carries N-acetylmethionine. The segment at 1-34 is disordered; the sequence is MDGETAEEQGGPVPPPVAPGGPGLGGAPGGRREP. Over residues 20 to 29 the composition is skewed to gly residues; sequence GGPGLGGAPG. Residues 44 to 304 form the Protein kinase domain; sequence QLSKQVLGLG…ITQFMNHPWI (261 aa). ATP is bound by residues 50-58 and Lys73; that span reads LGLGVNGKV. The Proton acceptor role is filled by Asp166. Phosphothreonine; by MAPK14 is present on Thr201. Ser251 is subject to Phosphoserine; by MAPK14. Ser307 is modified (phosphoserine; by autocatalysis). Residues 307–343 are autoinhibitory helix; that stretch reads SMVVPQTPLHTARVLQEDKDHWDEVKEEMTSALATMR. Thr313 carries the post-translational modification Phosphothreonine; by MAPK14. Residues 335–344 carry the Nuclear export signal (NES) motif; that stretch reads MTSALATMRV. A p38 MAPK-binding site region spans residues 345 to 369; sequence DYDQVKIKDLKTSNNRLLNKRRKKQ. 2 short sequence motifs (bipartite nuclear localization signal) span residues 350–353 and 364–368; these read KIKD and KRRKK. The segment at 357-382 is disordered; it reads SNNRLLNKRRKKQAGSSSASQGCNNQ. The segment covering 370–382 has biased composition (polar residues); sequence AGSSSASQGCNNQ.

It belongs to the protein kinase superfamily. CAMK Ser/Thr protein kinase family. Heterodimer with p38-alpha/MAPK14. The heterodimer with p38-alpha/MAPK14 forms a stable complex: molecules are positioned 'face to face' so that the ATP-binding sites of both kinases are at the heterodimer interface. Interacts with TCF3 and with polycomb proteins, such as PCH2 and BMI1/PCGF4. Phosphorylated and activated by MAPK1/ERK2 and MAPK3/ERK1. Phosphorylated and activated by MAP kinase p38-alpha/MAPK14 at Thr-201, Ser-251 and Thr-313. In terms of tissue distribution, widely expressed, with a higher expression level observed in heart and skeletal muscle. No expression in brain. Expressed in the retinal pigment epithelium.

The protein resides in the nucleus. It localises to the cytoplasm. The catalysed reaction is L-seryl-[protein] + ATP = O-phospho-L-seryl-[protein] + ADP + H(+). It catalyses the reaction L-threonyl-[protein] + ATP = O-phospho-L-threonyl-[protein] + ADP + H(+). Its activity is regulated as follows. Activated following phosphorylation by p38-alpha/MAPK14 following various stresses. Inhibited by ligand 5B (2'-[2-(1,3-benzodioxol-5-yl)pyrimidin-4-yl]-5',6'-dihydrospiro[piperidine-4,7'-pyrrolo[3,2-c]pyridin]- 4'(1'h)-one) and ligand P4O (2-[2-(2-fluorophenyl)pyridin-4-yl]-1,5,6,7-tetrahydro- 4h-pyrrolo[3,2-c]pyridin-4-one), 2 ATP-competitive inhibitors. Its function is as follows. Stress-activated serine/threonine-protein kinase involved in cytokines production, endocytosis, cell migration, chromatin remodeling and transcriptional regulation. Following stress, it is phosphorylated and activated by MAP kinase p38-alpha/MAPK14, leading to phosphorylation of substrates. Phosphorylates serine in the peptide sequence, Hyd-X-R-X(2)-S, where Hyd is a large hydrophobic residue. MAPKAPK2 and MAPKAPK3, share the same function and substrate specificity, but MAPKAPK3 kinase activity and level in protein expression are lower compared to MAPKAPK2. Phosphorylates HSP27/HSPB1, KRT18, KRT20, RCSD1, RPS6KA3, TAB3 and TTP/ZFP36. Mediates phosphorylation of HSP27/HSPB1 in response to stress, leading to dissociate HSP27/HSPB1 from large small heat-shock protein (sHsps) oligomers and impair their chaperone activities and ability to protect against oxidative stress effectively. Involved in inflammatory response by regulating tumor necrosis factor (TNF) and IL6 production post-transcriptionally: acts by phosphorylating AU-rich elements (AREs)-binding proteins, such as TTP/ZFP36, leading to regulate the stability and translation of TNF and IL6 mRNAs. Phosphorylation of TTP/ZFP36, a major post-transcriptional regulator of TNF, promotes its binding to 14-3-3 proteins and reduces its ARE mRNA affinity leading to inhibition of dependent degradation of ARE-containing transcript. Involved in toll-like receptor signaling pathway (TLR) in dendritic cells: required for acute TLR-induced macropinocytosis by phosphorylating and activating RPS6KA3. Also acts as a modulator of Polycomb-mediated repression. The protein is MAP kinase-activated protein kinase 3 (MAPKAPK3) of Homo sapiens (Human).